A 444-amino-acid polypeptide reads, in one-letter code: L-ornithine N(5)-monooxygenase (444 aa).

FAD is bound by residues 40–48 (ERQPAFGWH) and Gln59. Lys64 is a binding site for substrate. Val125 serves as a coordination point for FAD. NADP(+) is bound by residues 211 to 214 (AGQS) and Arg236. Substrate contacts are provided by residues 250–253 (NEIF) and Asn280. NADP(+) is bound at residue 280 to 282 (NYA). Position 408–410 (408–410 (RCC)) interacts with FAD. Residues 420–432 (SARRSKTGSRPRT) are compositionally biased toward basic residues. A disordered region spans residues 420–444 (SARRSKTGSRPRTMKAWPGPRTKND).

Belongs to the lysine N(6)-hydroxylase/L-ornithine N(5)-oxygenase family. The cofactor is FAD.

It catalyses the reaction L-ornithine + NADPH + O2 = N(5)-hydroxy-L-ornithine + NADP(+) + H2O. Its pathway is siderophore biosynthesis; ornibactin biosynthesis. Functionally, catalyzes the conversion of L-ornithine to N(5)-hydroxyornithine, the first step in the biosynthesis of all hydroxamate-containing siderophores, such as ornibactin. This is L-ornithine N(5)-monooxygenase from Burkholderia cepacia (Pseudomonas cepacia).